A 169-amino-acid polypeptide reads, in one-letter code: Allophycocyanin subunit beta-18 (169 aa).

N72 is modified (N4-methylasparagine). C82 contributes to the (2R,3E)-phycocyanobilin binding site.

It belongs to the phycobiliprotein family. In terms of assembly, heterodimer of an alpha and a beta chain. Post-translationally, contains one covalently linked bilin chromophore.

The protein resides in the plastid. The protein localises to the chloroplast thylakoid membrane. Light-harvesting photosynthetic bile pigment-protein from the phycobiliprotein complex. Allophycocyanin has a maximum absorption at approximately 650 nanometers. This Pyropia yezoensis (Susabi-nori) protein is Allophycocyanin subunit beta-18 (apcF).